The following is a 465-amino-acid chain: Antithrombin-III (465 aa).

The signal sequence occupies residues 1 to 32 (MISNGIGTVTTGKRSMCLFPLLLIGLWGCVTC). Disulfide bonds link Cys-41-Cys-161 and Cys-54-Cys-128. Thr-64 is modified (phosphothreonine). A Phosphoserine modification is found at Ser-69. A heparin-binding site is contributed by Trp-82. Residue Asn-129 is glycosylated (N-linked (GlcNAc...) asparagine). Arg-162 is a binding site for heparin. N-linked (GlcNAc...) asparagine glycosylation occurs at Asn-168. Heparin is bound at residue Arg-178. N-linked (GlcNAc...) asparagine glycosylation is found at Asn-188 and Asn-225. A disulfide bridge connects residues Cys-280 and Cys-463.

The protein belongs to the serpin family. In terms of assembly, forms protease inhibiting heterodimer with TMPRSS7. In terms of processing, phosphorylated by FAM20C in the extracellular medium. In terms of tissue distribution, plasma.

It localises to the secreted. It is found in the extracellular space. Most important serine protease inhibitor in plasma that regulates the blood coagulation cascade. AT-III inhibits thrombin, matriptase-3/TMPRSS7, as well as factors IXa, Xa and XIa. Its inhibitory activity is greatly enhanced in the presence of heparin. This chain is Antithrombin-III (SERPINC1), found in Ovis aries (Sheep).